The sequence spans 141 residues: Single-stranded DNA-binding protein 2 (141 aa).

One can recognise an SSB domain in the interval 1–104; that stretch reads MLNRTVLVGR…VVADSVQFLE (104 aa). The disordered stretch occupies residues 104-141; sequence EPKNNNQQQNNNYQQQRQTQTGNNPFDNNADSIEDLPF. Over residues 107–127 the composition is skewed to low complexity; sequence NNNQQQNNNYQQQRQTQTGNN.

As to quaternary structure, homotetramer.

This Staphylococcus aureus (strain Mu50 / ATCC 700699) protein is Single-stranded DNA-binding protein 2 (ssb-p).